Consider the following 444-residue polypeptide: Probable glycine dehydrogenase (decarboxylating) subunit 1 (444 aa).

Belongs to the GcvP family. N-terminal subunit subfamily. As to quaternary structure, the glycine cleavage system is composed of four proteins: P, T, L and H. In this organism, the P 'protein' is a heterodimer of two subunits.

It carries out the reaction N(6)-[(R)-lipoyl]-L-lysyl-[glycine-cleavage complex H protein] + glycine + H(+) = N(6)-[(R)-S(8)-aminomethyldihydrolipoyl]-L-lysyl-[glycine-cleavage complex H protein] + CO2. Its function is as follows. The glycine cleavage system catalyzes the degradation of glycine. The P protein binds the alpha-amino group of glycine through its pyridoxal phosphate cofactor; CO(2) is released and the remaining methylamine moiety is then transferred to the lipoamide cofactor of the H protein. In Carboxydothermus hydrogenoformans (strain ATCC BAA-161 / DSM 6008 / Z-2901), this protein is Probable glycine dehydrogenase (decarboxylating) subunit 1.